The chain runs to 155 residues: Glycosylation-dependent cell adhesion molecule 1 (155 aa).

Positions 1–18 (MKFFAVLLLASLAATSLA) are cleaved as a signal peptide. A glycan (O-linked (GalNAc...) threonine) is linked at Thr-34. Phosphoserine occurs at positions 48, 53, 57, 59, and 65. A disordered region spans residues 74 to 109 (ARRHQNQNPKLLHPVPQESSFRNTATQSEETKELTP). Positions 90–101 (QESSFRNTATQS) are enriched in polar residues.

The protein belongs to the PP3/GlyCAM-1 family. As to expression, highly expressed in whey fraction of camel milk.

In Camelus dromedarius (Dromedary), this protein is Glycosylation-dependent cell adhesion molecule 1 (GLYCAM1).